A 241-amino-acid chain; its full sequence is Probable 2-phosphosulfolactate phosphatase (241 aa).

Belongs to the ComB family. Requires Mg(2+) as cofactor.

It catalyses the reaction (2R)-O-phospho-3-sulfolactate + H2O = (2R)-3-sulfolactate + phosphate. The polypeptide is Probable 2-phosphosulfolactate phosphatase (Gloeothece citriformis (strain PCC 7424) (Cyanothece sp. (strain PCC 7424))).